A 529-amino-acid chain; its full sequence is UDP-glucuronosyltransferase 2B11 (529 aa).

Residues 1-21 (MTLKWTSVLLLIHLSCYFSSG) form the signal peptide. N6-succinyllysine is present on Lys-135. Asn-315 carries N-linked (GlcNAc...) asparagine glycosylation. The chain crosses the membrane as a helical span at residues 493-513 (VIGFLLACVATVIFIITKFCL).

It belongs to the UDP-glycosyltransferase family. As to expression, widely expressed.

It is found in the microsome membrane. The protein resides in the endoplasmic reticulum membrane. It carries out the reaction glucuronate acceptor + UDP-alpha-D-glucuronate = acceptor beta-D-glucuronoside + UDP + H(+). Its function is as follows. UDPGT is of major importance in the conjugation and subsequent elimination of potentially toxic xenobiotics and endogenous compounds. The chain is UDP-glucuronosyltransferase 2B11 (UGT2B11) from Homo sapiens (Human).